The primary structure comprises 518 residues: 4-trimethylaminobutyraldehyde dehydrogenase B (518 aa).

Residues K204 and 256 to 260 each bind NAD(+); that span reads GSVPT. E278 (proton acceptor) is an active-site residue. C312 serves as the catalytic Nucleophile. E415 contributes to the NAD(+) binding site.

It belongs to the aldehyde dehydrogenase family. In terms of assembly, homotetramer.

The protein resides in the cytoplasm. It localises to the cytosol. The catalysed reaction is 4-(trimethylamino)butanal + NAD(+) + H2O = 4-(trimethylamino)butanoate + NADH + 2 H(+). It catalyses the reaction an aldehyde + NAD(+) + H2O = a carboxylate + NADH + 2 H(+). Its pathway is amine and polyamine biosynthesis; carnitine biosynthesis. Functionally, converts gamma-trimethylaminobutyraldehyde into gamma-butyrobetaine with high efficiency (in vitro). Can catalyze the irreversible oxidation of a broad range of aldehydes to the corresponding acids in an NAD-dependent reaction, but with low efficiency. The chain is 4-trimethylaminobutyraldehyde dehydrogenase B (aldh9a1b) from Danio rerio (Zebrafish).